The following is a 106-amino-acid chain: ATP-dependent Clp protease adapter protein ClpS (106 aa).

The protein belongs to the ClpS family. As to quaternary structure, binds to the N-terminal domain of the chaperone ClpA.

Functionally, involved in the modulation of the specificity of the ClpAP-mediated ATP-dependent protein degradation. This chain is ATP-dependent Clp protease adapter protein ClpS, found in Cronobacter sakazakii (strain ATCC BAA-894) (Enterobacter sakazakii).